The chain runs to 309 residues: Protein FdhE homolog (309 aa).

The protein belongs to the FdhE family.

The protein localises to the cytoplasm. In terms of biological role, necessary for formate dehydrogenase activity. This chain is Protein FdhE homolog, found in Serratia proteamaculans (strain 568).